Reading from the N-terminus, the 157-residue chain is uncharacterized protein (157 aa).

An N-terminal signal peptide occupies residues 1–26; that stretch reads MEALRRAHEVALRLLLCRPWASRAAA.

The protein resides in the secreted. This is an uncharacterized protein from Homo sapiens (Human).